A 505-amino-acid chain; its full sequence is uncharacterized protein (505 aa).

Residues M1–A22 form the signal peptide. 2 N-linked (GlcNAc...) asparagine glycosylation sites follow: N25 and N114. 5 helical membrane-spanning segments follow: residues L181–I201, I216–F236, F266–L286, I291–P311, and V318–V338. N-linked (GlcNAc...) asparagine glycosylation is present at N342. A run of 2 helical transmembrane segments spans residues I365 to I385 and L400 to I420. The N-linked (GlcNAc...) asparagine glycan is linked to N454.

The protein belongs to the LU7TM family.

The protein resides in the membrane. This is an uncharacterized protein from Schizosaccharomyces pombe (strain 972 / ATCC 24843) (Fission yeast).